The sequence spans 242 residues: Probable transcriptional regulatory protein NGO_1291 (242 aa).

This sequence belongs to the TACO1 family.

It localises to the cytoplasm. This is Probable transcriptional regulatory protein NGO_1291 from Neisseria gonorrhoeae (strain ATCC 700825 / FA 1090).